We begin with the raw amino-acid sequence, 310 residues long: Solute carrier family 25 member 47 (310 aa).

Solcar repeat units follow at residues 1–80 (MDFV…CLAH), 93–208 (PTKA…LSEW), and 217–304 (PDVL…VLRL). A run of 6 helical transmembrane segments spans residues 3-23 (FVAG…LDTV), 49-69 (LWGF…VSSV), 98-116 (ITLS…TSPT), 192-212 (GHSF…LTPA), 219-239 (VLGV…VATP), and 275-295 (VLFK…MVVF).

The protein belongs to the mitochondrial carrier (TC 2.A.29) family.

It localises to the mitochondrion inner membrane. Its subcellular location is the mitochondrion outer membrane. It catalyses the reaction NAD(+)(in) = NAD(+)(out). The catalysed reaction is acetyl-CoA(in) = acetyl-CoA(out). Its function is as follows. Mitochondrial NAD(+) transporter that acts as a 'metabolic gate' in hepatic lipogenesis. Provides NAD(+) substrate to mitochondrial SIRT3 deacetylase and enables its NAD(+)-dependent activities in mitochondrial energy metabolism. This triggers downstream activation of PRKAA1/AMPK-alpha signaling cascade that negatively regulates sterol regulatory element-binding protein (SREBP) transcriptional activities and ATP-consuming lipogenesis to restore cellular energy balance. May transport other mitochondrial metabolites having an aromatic nucleotide and phosphate groups, such as acetyl-CoA. Does not transport amino acids. The transport mechanism remains to be elucidated. The polypeptide is Solute carrier family 25 member 47 (Rattus norvegicus (Rat)).